The sequence spans 58 residues: Large ribosomal subunit protein bL33 (58 aa).

The protein belongs to the bacterial ribosomal protein bL33 family.

This Brachyspira hyodysenteriae (strain ATCC 49526 / WA1) protein is Large ribosomal subunit protein bL33.